The primary structure comprises 669 residues: GTP-binding protein 1 (669 aa).

Residues 1–32 (MAAERSRSPMESPVPASMFAPEPSSPGAARAA) form a disordered region. 8 positions are modified to phosphoserine: S6, S8, S12, S24, S25, S44, S47, and S69. The tr-type G domain occupies 158–389 (FLEVRVAVVG…LNLLSPRTSY (232 aa)). The segment at 167-174 (GNVDAGKS) is G1. 167–174 (GNVDAGKS) is a binding site for GTP. A G2 region spans residues 206 to 210 (GRTSS). Positions 252–255 (DLAG) are G3. GTP-binding positions include 252–256 (DLAGH) and 308–311 (TKID). The segment at 308–311 (TKID) is G4. Residues 366-368 (SNV) are G5. Positions 573-595 (LLQTTNNSPMNSKPQQIKMQSTK) are enriched in polar residues. The disordered stretch occupies residues 573 to 669 (LLQTTNNSPM…GACMTPASGC (97 aa)). S580 is subject to Phosphoserine. The segment covering 633–645 (SSSLQPQPKPSSG) has biased composition (low complexity). Positions 646 to 657 (GRRRGGQRHKVK) are enriched in basic residues.

It belongs to the TRAFAC class translation factor GTPase superfamily. Classic translation factor GTPase family. GTPBP1 subfamily. In terms of assembly, interacts with EXOSC2/RRP4, EXOSC3/RRP40, EXOSC5/RRP46, HNRNPD, HNRNPR and SYNCRIP. Identified in a complex with AANAT mRNA, but does not bind mRNA by itself.

The protein localises to the cytoplasm. Promotes degradation of target mRNA species. Plays a role in the regulation of circadian mRNA stability. Binds GTP and has GTPase activity. This Bos taurus (Bovine) protein is GTP-binding protein 1 (GTPBP1).